The sequence spans 300 residues: Acetylglutamate kinase (300 aa).

Substrate-binding positions include 73-74 (GG), Arg-95, and Asn-197.

This sequence belongs to the acetylglutamate kinase family. ArgB subfamily.

It localises to the cytoplasm. It catalyses the reaction N-acetyl-L-glutamate + ATP = N-acetyl-L-glutamyl 5-phosphate + ADP. Its pathway is amino-acid biosynthesis; L-arginine biosynthesis; N(2)-acetyl-L-ornithine from L-glutamate: step 2/4. In terms of biological role, catalyzes the ATP-dependent phosphorylation of N-acetyl-L-glutamate. This Bordetella avium (strain 197N) protein is Acetylglutamate kinase.